Here is a 612-residue protein sequence, read N- to C-terminus: Dihydroxy-acid dehydratase (612 aa).

Mg(2+) is bound at residue Asp81. Position 122 (Cys122) interacts with [2Fe-2S] cluster. Residues Asp123 and Lys124 each contribute to the Mg(2+) site. Lys124 is subject to N6-carboxylysine. A [2Fe-2S] cluster-binding site is contributed by Cys195. A Mg(2+)-binding site is contributed by Glu491. Ser517 functions as the Proton acceptor in the catalytic mechanism.

This sequence belongs to the IlvD/Edd family. Homodimer. Requires [2Fe-2S] cluster as cofactor. Mg(2+) is required as a cofactor.

It carries out the reaction (2R)-2,3-dihydroxy-3-methylbutanoate = 3-methyl-2-oxobutanoate + H2O. The enzyme catalyses (2R,3R)-2,3-dihydroxy-3-methylpentanoate = (S)-3-methyl-2-oxopentanoate + H2O. The protein operates within amino-acid biosynthesis; L-isoleucine biosynthesis; L-isoleucine from 2-oxobutanoate: step 3/4. It participates in amino-acid biosynthesis; L-valine biosynthesis; L-valine from pyruvate: step 3/4. Functionally, functions in the biosynthesis of branched-chain amino acids. Catalyzes the dehydration of (2R,3R)-2,3-dihydroxy-3-methylpentanoate (2,3-dihydroxy-3-methylvalerate) into 2-oxo-3-methylpentanoate (2-oxo-3-methylvalerate) and of (2R)-2,3-dihydroxy-3-methylbutanoate (2,3-dihydroxyisovalerate) into 2-oxo-3-methylbutanoate (2-oxoisovalerate), the penultimate precursor to L-isoleucine and L-valine, respectively. This Sinorhizobium medicae (strain WSM419) (Ensifer medicae) protein is Dihydroxy-acid dehydratase.